The primary structure comprises 282 residues: 2-dehydro-3-deoxyphosphooctonate aldolase (282 aa).

The protein belongs to the KdsA family.

The protein localises to the cytoplasm. It catalyses the reaction D-arabinose 5-phosphate + phosphoenolpyruvate + H2O = 3-deoxy-alpha-D-manno-2-octulosonate-8-phosphate + phosphate. It participates in carbohydrate biosynthesis; 3-deoxy-D-manno-octulosonate biosynthesis; 3-deoxy-D-manno-octulosonate from D-ribulose 5-phosphate: step 2/3. Its pathway is bacterial outer membrane biogenesis; lipopolysaccharide biosynthesis. The sequence is that of 2-dehydro-3-deoxyphosphooctonate aldolase from Shewanella oneidensis (strain ATCC 700550 / JCM 31522 / CIP 106686 / LMG 19005 / NCIMB 14063 / MR-1).